The chain runs to 205 residues: Small ribosomal subunit protein uS4 (205 aa).

The tract at residues 19-45 (IWGRPKSPVNRREYGPGQHGQRRKGKL) is disordered. An S4 RNA-binding domain is found at 94–157 (SRLDAVVYRA…KQLAIVLEAV (64 aa)).

The protein belongs to the universal ribosomal protein uS4 family. As to quaternary structure, part of the 30S ribosomal subunit. Contacts protein S5. The interaction surface between S4 and S5 is involved in control of translational fidelity.

One of the primary rRNA binding proteins, it binds directly to 16S rRNA where it nucleates assembly of the body of the 30S subunit. Its function is as follows. With S5 and S12 plays an important role in translational accuracy. In Brucella suis biovar 1 (strain 1330), this protein is Small ribosomal subunit protein uS4.